A 59-amino-acid chain; its full sequence is Large ribosomal subunit protein bL32 (59 aa).

Residues 1–59 (MAVQQNKKSPSKRGMHRSHDFLTTAPIAVEPTTGEVHLRHHVSPNGYYRGRKVVKTKND) form a disordered region. A compositionally biased stretch (basic residues) spans 49 to 59 (RGRKVVKTKND).

This sequence belongs to the bacterial ribosomal protein bL32 family.

The protein is Large ribosomal subunit protein bL32 of Ralstonia pickettii (strain 12J).